The primary structure comprises 105 residues: UPF0235 protein RF_1332 (105 aa).

This sequence belongs to the UPF0235 family.

The sequence is that of UPF0235 protein RF_1332 from Rickettsia felis (strain ATCC VR-1525 / URRWXCal2) (Rickettsia azadi).